We begin with the raw amino-acid sequence, 596 residues long: (E)-beta-ocimene synthase, chloroplastic (596 aa).

Residues 1–35 (MAITHYQMASFQSSFHFCMLRKTLRQKSSLHFAKR) constitute a chloroplast transit peptide. (2E)-geranyl diphosphate-binding residues include arginine 307, aspartate 344, aspartate 348, arginine 485, and asparagine 488. Mg(2+)-binding residues include aspartate 344 and aspartate 348. The DDXXD motif signature appears at 344–348 (DDIYD). Mg(2+)-binding residues include asparagine 488, alanine 492, and glutamate 496.

The protein belongs to the terpene synthase family. Tpsb subfamily. Mg(2+) serves as cofactor. Requires Mn(2+) as cofactor. In terms of tissue distribution, highly expressed in leaves, stems and disk florets. Detected in roots.

The protein resides in the plastid. The protein localises to the chloroplast. The catalysed reaction is (2E)-geranyl diphosphate = (E)-beta-ocimene + diphosphate. The protein operates within secondary metabolite biosynthesis; terpenoid biosynthesis. In terms of biological role, monoterpene synthase involved in the biosynthesis of (E)-beta-ocimene as the major product and trace amounts of (Z)-beta-ocimene. Can only accept geranyl diphosphate as substrate. This is (E)-beta-ocimene synthase, chloroplastic from Matricaria chamomilla var. recutita (German chamomile).